We begin with the raw amino-acid sequence, 146 residues long: Holo-[acyl-carrier-protein] synthase (146 aa).

Positions 9 and 63 each coordinate Mg(2+).

Belongs to the P-Pant transferase superfamily. AcpS family. Requires Mg(2+) as cofactor.

It localises to the cytoplasm. It carries out the reaction apo-[ACP] + CoA = holo-[ACP] + adenosine 3',5'-bisphosphate + H(+). Functionally, transfers the 4'-phosphopantetheine moiety from coenzyme A to a Ser of acyl-carrier-protein. This Burkholderia multivorans (strain ATCC 17616 / 249) protein is Holo-[acyl-carrier-protein] synthase.